The sequence spans 484 residues: Dual specificity protein kinase CLK1 (484 aa).

The tract at residues 1–42 is disordered; sequence MRHSKRTYCPDWDDKDWDYGKWRSSSSHKRRKRSHSSAQENK. Residues 26–35 are compositionally biased toward basic residues; the sequence is SSHKRRKRSH. Residue Ser-61 is modified to Phosphoserine. Residues 79 to 146 form a disordered region; the sequence is DYTQGCEPGH…RTRSVEDDEE (68 aa). Positions 86 to 97 are enriched in basic and acidic residues; it reads PGHRQRDHESRY. Residues 100-112 are compositionally biased toward low complexity; that stretch reads HSSKSSGRSGRSS. A compositionally biased stretch (basic residues) spans 113-138; that stretch reads YKSKHRIHHSTSHRRSHGKSHRRKRT. At Thr-138 the chain carries Phosphothreonine. Ser-140 is modified (phosphoserine). The region spanning 161 to 477 is the Protein kinase domain; it reads YEIVDTLGEG…LREALKHPFF (317 aa). ATP contacts are provided by residues 167–175 and Lys-191; that span reads LGEGAFGKV. Asp-288 functions as the Proton acceptor in the catalytic mechanism.

This sequence belongs to the protein kinase superfamily. CMGC Ser/Thr protein kinase family. Lammer subfamily. Interacts with PPIG and UBL5. Autophosphorylates on all three types of residues. In terms of tissue distribution, endothelial cells.

Its subcellular location is the nucleus. The enzyme catalyses L-seryl-[protein] + ATP = O-phospho-L-seryl-[protein] + ADP + H(+). The catalysed reaction is L-threonyl-[protein] + ATP = O-phospho-L-threonyl-[protein] + ADP + H(+). It catalyses the reaction L-tyrosyl-[protein] + ATP = O-phospho-L-tyrosyl-[protein] + ADP + H(+). Its activity is regulated as follows. Regulates splicing of its own pre-mRNA according to its kinase activity; increased expression of the catalytically active form influences splicing to generate the catalytically inactive splicing variant lacking the kinase domain. Leucettine L41 inhibits its kinase activity and affects the regulation of alternative splicing mediated by phosphorylation of SR proteins. Functionally, dual specificity kinase acting on both serine/threonine and tyrosine-containing substrates. Phosphorylates serine- and arginine-rich (SR) proteins of the spliceosomal complex and may be a constituent of a network of regulatory mechanisms that enable SR proteins to control RNA splicing. Phosphorylates: SRSF1, SRSF3 and PTPN1. Regulates the alternative splicing of tissue factor (F3) pre-mRNA in endothelial cells. This Homo sapiens (Human) protein is Dual specificity protein kinase CLK1.